Here is a 762-residue protein sequence, read N- to C-terminus: Putative BTB/POZ domain-containing protein L272 (762 aa).

Positions 16-86 (TDITIILKDE…FYGQKIKSHN (71 aa)) constitute a BTB domain. The span at 390 to 410 (DLDNSNDLNDSNDLDDSDDSN) shows a compositional bias: acidic residues. Disordered stretches follow at residues 390–411 (DLDN…DSND) and 532–556 (ISDN…NSDN). A compositionally biased stretch (low complexity) spans 532–543 (ISDNSDNLNNSD). Residues 737 to 762 (FSENYCDELINRLNNALKKIEQKYPN) adopt a coiled-coil conformation.

The protein belongs to the mimivirus BTB/WD family.

This is Putative BTB/POZ domain-containing protein L272 from Acanthamoeba polyphaga (Amoeba).